The following is a 454-amino-acid chain: MSFVPGQENAGGRSSSGNRAGNGILKKTTWADQTERGPNNQNRGRRNQPKQTATTQPNSGSVVPHYSWFSGITQFQKGKEFQFAEGQGVPIANGIPASEQKGYWYRHNRRSFKTPDGQQKQLLPRWYFYYLGTGPHAGASYGDSIEGVFWVANSQADTNTRSDIVERDPSSHEAIPTRFAPGTVLPQGFYVEGSGRSAPASRSGSRSQSRGPNNRARSSSNQRQPASTVKPDMAEEIAALVLAKLGKDAGQPKQVTKQSAKEVRQKILNKPRQKRTPNKQCPVQQCFGKRGPNQNFGGSEMLKLGTSDPQFPILAELAPTVGAFFFGSKLELVKKNSGGADEPTKDVYELQYSGAVRFDSTLPGFETIMKVLNENLNAYQKDGGADVVSPKPQRKGRRQAQEKKDEVDNVSVAKPKSSVQRNVSRELTPEDRSLLAQILDDGVVPDGLEDDSNV.

Residues 1–62 are disordered; that stretch reads MSFVPGQENA…ATTQPNSGSV (62 aa). Residues 10–23 show a composition bias toward low complexity; sequence AGGRSSSGNRAGNG. Polar residues predominate over residues 50–61; the sequence is KQTATTQPNSGS. Residues 56-197 are RNA-binding; sequence QPNSGSVVPH…GFYVEGSGRS (142 aa). A CoV N NTD domain is found at 64 to 193; sequence PHYSWFSGIT…VLPQGFYVEG (130 aa). Residues Arg109 and Arg125 each contribute to the RNA site. Disordered stretches follow at residues 160 to 179, 186 to 230, 271 to 292, and 382 to 428; these read TRSDIVERDPSSHEAIPTRF, PQGF…STVK, PRQKRTPNKQCPVQQCFGKRGP, and DGGA…RELT. A Phosphoserine; by host modification is found at Ser162. Arg167 contacts RNA. A Phosphoserine; by host modification is found at Ser170. A Phosphothreonine; by host modification is found at Thr177. The segment covering 193–212 has biased composition (low complexity); sequence GSGRSAPASRSGSRSQSRGP. Ser194 carries the phosphoserine; by host modification. Positions 215–227 are enriched in polar residues; it reads RARSSSNQRQPAS. The CoV N CTD domain occupies 260–383; sequence AKEVRQKILN…ENLNAYQKDG (124 aa). Positions 267 to 383 are dimerization; that stretch reads ILNKPRQKRT…ENLNAYQKDG (117 aa). Residues Ser389 and Ser424 each carry the phosphoserine; by host modification. A Phosphothreonine; by host modification is found at Thr428.

Belongs to the betacoronavirus nucleocapsid protein family. In terms of assembly, homooligomer. Both monomeric and oligomeric forms interact with RNA. Interacts with protein M. Interacts with NSP3; this interaction serves to tether the genome to the newly translated replicase-transcriptase complex at a very early stage of infection. In terms of processing, ADP-ribosylated. The ADP-ribosylation is retained in the virion during infection. Phosphorylated on serine and threonine residues.

Its subcellular location is the virion. It localises to the host endoplasmic reticulum-Golgi intermediate compartment. The protein localises to the host Golgi apparatus. In terms of biological role, major structural component of virions that associates with genomic RNA to form a long, flexible, helical nucleocapsid. Interaction with the M protein leads to the formation of virus particles. Binds to cellular membranes and phospholipids. Elicits cell-mediated immunity. May play roles in viral transcription and translation, and/or replication. Induces transcription of the prothrombinase (FGL2) and elevates procoagulant activity. Its function is as follows. Packages the positive strand viral genome RNA into a helical ribonucleocapsid (RNP) and plays a fundamental role during virion assembly through its interactions with the viral genome and membrane protein M. Plays an important role in enhancing the efficiency of subgenomic viral RNA transcription as well as viral replication. The chain is Nucleoprotein from Mus musculus (Mouse).